The primary structure comprises 822 residues: ATP-dependent zinc metalloprotease FtsH (822 aa).

The Cytoplasmic portion of the chain corresponds to 1–76 (MEFNKLELLI…NQKEPGKARK (76 aa)). The span at 44–54 (SLDQPSDAPSN) shows a compositional bias: polar residues. The interval 44-71 (SLDQPSDAPSNNKKRNLDQPDNPNQKEP) is disordered. Residues 77–97 (IIWSFIIIILVLGVLALIILS) form a helical membrane-spanning segment. Residues 98–251 (GFSFSATSLN…QSMSLPTSYS (154 aa)) are Extracellular-facing. The chain crosses the membrane as a helical span at residues 252 to 272 (FYTAASLVLSILPFILLIGII). Over 273–822 (YYSMRKMGQA…SKESSSDKKK (550 aa)) the chain is Cytoplasmic. 347–354 (GPPGTGKT) serves as a coordination point for ATP. His569 is a binding site for Zn(2+). Glu570 is an active-site residue. Zn(2+) contacts are provided by His573 and Asp648. Residues 758-794 (KKELEEKKKAEDLIRKAKKESEASSKEEKEMDVEKKV) are compositionally biased toward basic and acidic residues. The tract at residues 758-822 (KKELEEKKKA…SKESSSDKKK (65 aa)) is disordered. Positions 796–805 (KPSASSTEPT) are enriched in low complexity. Basic and acidic residues predominate over residues 812-822 (PSKESSSDKKK).

The protein in the central section; belongs to the AAA ATPase family. It in the C-terminal section; belongs to the peptidase M41 family. As to quaternary structure, homohexamer. Zn(2+) serves as cofactor.

The protein localises to the cell membrane. Acts as a processive, ATP-dependent zinc metallopeptidase for both cytoplasmic and membrane proteins. Plays a role in the quality control of integral membrane proteins. The protein is ATP-dependent zinc metalloprotease FtsH of Malacoplasma penetrans (strain HF-2) (Mycoplasma penetrans).